The following is a 356-amino-acid chain: Myricetin 7/4'-O-methyltransferase 2 (356 aa).

Residue Asp-222 coordinates S-adenosyl-L-methionine. The Proton acceptor role is filled by His-260.

It belongs to the class I-like SAM-binding methyltransferase superfamily. Cation-independent O-methyltransferase family. Homodimer.

The enzyme catalyses quercetin + S-adenosyl-L-methionine = rhamnetin + S-adenosyl-L-homocysteine + H(+). The catalysed reaction is kaempferol + S-adenosyl-L-methionine = kaempferide + S-adenosyl-L-homocysteine + H(+). It catalyses the reaction myricetin + S-adenosyl-L-methionine = 7-O-methylmyricetin + S-adenosyl-L-homocysteine + H(+). It carries out the reaction kaempferide + S-adenosyl-L-methionine = 7,4'-O-dimethylkaempferol + S-adenosyl-L-homocysteine + H(+). The enzyme catalyses isorhamnetin + S-adenosyl-L-methionine = 3',4'-O-dimethylquercetin + S-adenosyl-L-homocysteine + 2 H(+). The catalysed reaction is 3',4',5,7-tetrahydroxy-3-methoxyflavone + S-adenosyl-L-methionine = 3',4',5-trihydroxy-3,7-dimethoxyflavone + S-adenosyl-L-homocysteine + H(+). It catalyses the reaction rhamnetin + S-adenosyl-L-methionine = 7,4'-O-dimethylquercetin + S-adenosyl-L-homocysteine + H(+). It carries out the reaction syringetin + S-adenosyl-L-methionine = 7,3',5'-O-trimethylmyricetin + S-adenosyl-L-homocysteine + H(+). The enzyme catalyses 3',4',5'-O-trimethylmyricetin + S-adenosyl-L-methionine = 7,3',4',5'-O-tetramethylmyricetin + S-adenosyl-L-homocysteine. Its pathway is flavonoid metabolism. Flavonoid 7/4'-O-methyltransferase involved in the biosynthesis of polymethoxylated flavonoids natural products such as myricetin derivatives, aroma compounds possessing antioxidant properties and exhibiting pharmacological activities such as anti-carcinogen, anti-viral, anti-thrombotic, anti-diabetic, anti-atherosclerotic, and anti-inflammatory effects. Catalyzes S-adenosylmethionine-dependent regioselective 7/4'-O-methylation of flavonoids; active on various hydroxylated flavonoid substrates. The polypeptide is Myricetin 7/4'-O-methyltransferase 2 (Solanum lycopersicum (Tomato)).